The sequence spans 377 residues: Endolytic peptidoglycan transglycosylase RlpA (377 aa).

The signal sequence occupies residues 1–19; that stretch reads MHKQLPVICVAAGIVLLAA. Cys-20 carries N-palmitoyl cysteine lipidation. A lipid anchor (S-diacylglycerol cysteine) is attached at Cys-20. Positions 196-277 are disordered; that stretch reads LPPRPDLSGG…PVSAPVTAPA (82 aa). Composition is skewed to low complexity over residues 208-218 and 264-277; these read SASSAPAQPQG and PQTA…TAPA. One can recognise an SPOR domain in the interval 300-376; the sequence is AAASGRFVVQ…AQLQSFIASA (77 aa).

It belongs to the RlpA family.

The protein resides in the cell membrane. Its function is as follows. Lytic transglycosylase with a strong preference for naked glycan strands that lack stem peptides. The sequence is that of Endolytic peptidoglycan transglycosylase RlpA from Salmonella typhi.